A 463-amino-acid polypeptide reads, in one-letter code: MDFGVLPPEINSGRMYAGPGSGPMLAAAAAWDGLATELQSTAADYGSVISVLTGVWSGQSSGTMAAAAAPYVAWMSATAALAREAAAQASAAAAAYEAAFAATVPPPVVAANRAELAVLAATNIFGQNTGAIAAAEARYAEMWAQDAAAMYGYAGSSSVATQVTPFAAPPPTTNAAGLATQGVAVAQAVGASAGNARSLVSEVLEFLATAGTNYNKTVASLMNAVTGVPYASSVYNSMLGLGFAESKMVLPANDTVISTIFGMVQFQKFFNPVTPFNPDLIPKSALGAGLGLRSAISSGLGSTAPAISAGASQAGSVGGMSVPPSWAAATPAIRTVAAVFSSTGLQAVPAAAISEGSLLSQMALASVAGGALGGAAARATGGFLGGGRVTAVKKSLKDSDLPDKLRRVVAHMMEKPESVQHWHTDEDGLDDLLAELKKKPGIHAVHMAGGNKAEIAPTISESG.

The protein belongs to the mycobacterial PPE family.

This is an uncharacterized protein from Mycobacterium tuberculosis (strain CDC 1551 / Oshkosh).